Consider the following 423-residue polypeptide: MATIILGSQWGDEGKGKLTDILCPSAEICARSAGGHNAGHSIVAQGVSYDFHLLPSGLVNPKCMNLIGSGVVFHVPSFFSELEKLEAKGLAGVRDRIFVSDRCQVNFDLHAAVDGLEEVELGERKIGTTGRGIGPSYSTKASRSGVRISEVFDEAVFERKLRQLADGYRKRFGDLLKYDVEEEIARFKEYRKLLPNYVVDAVKFIKDAQDQNRKILIEGANALMLDIDYGTYPYVTSSNPCLGGIITGLAINPRKIETIVGVVKAYTTRVGDGIFKTEDEGEIGTKLQDIGREWGVSTGRKRRCGWLDLVVVKYSAAINHYTSLNLTKLDVLDTFPTLKVAVAYKDPATGEELDFFPADLSLLERCEVVYKEFEGWNTPTTHIKKFEELPAQARQYVEFIEQYVGVKVGWIGTGPDREDMIYR.

The active-site Proton acceptor is the D12. Mg(2+)-binding residues include D12 and G39. IMP-binding positions include 37–40 (NAGH), T129, R143, N221, T236, and R300. 39–41 (GHS) lines the GTP pocket. The Proton donor role is filled by H40. 296-302 (VSTGRKR) is a substrate binding site. GTP is bound by residues R302, 328–330 (KLD), and 412–414 (GTG).

This sequence belongs to the adenylosuccinate synthetase family. In terms of assembly, homodimer. Mg(2+) is required as a cofactor.

It localises to the cytoplasm. It carries out the reaction IMP + L-aspartate + GTP = N(6)-(1,2-dicarboxyethyl)-AMP + GDP + phosphate + 2 H(+). It participates in purine metabolism; AMP biosynthesis via de novo pathway; AMP from IMP: step 1/2. In terms of biological role, plays an important role in the de novo pathway and in the salvage pathway of purine nucleotide biosynthesis. Catalyzes the first committed step in the biosynthesis of AMP from IMP. The chain is Adenylosuccinate synthetase from Pyricularia oryzae (strain 70-15 / ATCC MYA-4617 / FGSC 8958) (Rice blast fungus).